The following is a 72-amino-acid chain: Translation initiation factor IF-1 (72 aa).

Positions Ala2 to Arg72 constitute an S1-like domain.

This sequence belongs to the IF-1 family. As to quaternary structure, component of the 30S ribosomal translation pre-initiation complex which assembles on the 30S ribosome in the order IF-2 and IF-3, IF-1 and N-formylmethionyl-tRNA(fMet); mRNA recruitment can occur at any time during PIC assembly.

Its subcellular location is the cytoplasm. Functionally, one of the essential components for the initiation of protein synthesis. Stabilizes the binding of IF-2 and IF-3 on the 30S subunit to which N-formylmethionyl-tRNA(fMet) subsequently binds. Helps modulate mRNA selection, yielding the 30S pre-initiation complex (PIC). Upon addition of the 50S ribosomal subunit IF-1, IF-2 and IF-3 are released leaving the mature 70S translation initiation complex. The sequence is that of Translation initiation factor IF-1 from Pasteurella multocida (strain Pm70).